The primary structure comprises 337 residues: Pentalenene synthase (337 aa).

Mg(2+) is bound by residues D80, D84, N219, S223, and E227. A DDXXD motif motif is present at residues 80 to 84 (DDLFD).

It belongs to the terpene synthase family. Monomer. Mg(2+) is required as a cofactor.

The catalysed reaction is (2E,6E)-farnesyl diphosphate = pentalenene + diphosphate. It participates in sesquiterpene biosynthesis; pentalenene biosynthesis; pentalenene from farnesyl diphosphate: step 1/1. The protein operates within antibiotic biosynthesis; pentalenolactone biosynthesis. Functionally, catalyzes the cyclization of farnesyl diphosphate (FPP) to the tricyclic sesquiterpene pentalenene, which is the hydrocarbon precursor of the pentalenolactone family of antibiotics produced by a variety of Streptomyces species. This is Pentalenene synthase (pntA) from Streptomyces arenae.